Here is a 241-residue protein sequence, read N- to C-terminus: Small ribosomal subunit protein uS10m (241 aa).

A mitochondrion-targeting transit peptide spans 1–54 (MIAGVLRRSSLPSRQTLSAALASFNSCISHNLTPATTGASVSSRFTLASSPNSF).

It belongs to the universal ribosomal protein uS10 family. In terms of assembly, component of the mitochondrial ribosome small subunit.

It localises to the mitochondrion. The polypeptide is Small ribosomal subunit protein uS10m (RPS10) (Arabidopsis thaliana (Mouse-ear cress)).